The following is a 554-amino-acid chain: Solute carrier family 22 member 1 (554 aa).

Over 1 to 21 the chain is Cytoplasmic; that stretch reads MPTVDDILEQVGESGWFQKQA. Residues 22–42 traverse the membrane as a helical segment; it reads FLILCLLSAAFAPICVGIVFL. Topologically, residues 43-149 are extracellular; the sequence is GFTPDHHCQS…LVCADSWKLD (107 aa). N-linked (GlcNAc...) asparagine glycosylation occurs at asparagine 71. A helical transmembrane segment spans residues 150–170; it reads LFQSCLNAGFLFGSLGVGYFA. Residues 171 to 176 lie on the Cytoplasmic side of the membrane; the sequence is DRFGRK. A helical membrane pass occupies residues 177 to 197; that stretch reads LCLLGTVLVNAVSGVLMAFSP. Topologically, residues 198–206 are extracellular; it reads NYMSMLLFR. The chain crosses the membrane as a helical span at residues 207-229; it reads LLQGLVSKGNWMAGYTLITEFVG. The Cytoplasmic segment spans residues 230–235; that stretch reads SGSRRT. Residues 236–256 form a helical membrane-spanning segment; the sequence is VAIMYQMAFTVGLVALTGLAY. Residues 257 to 262 are Extracellular-facing; sequence ALPHWR. Residues 263-283 traverse the membrane as a helical segment; the sequence is WLQLAVSLPTFLFLLYYWCVP. Positions 283–287 match the Proline-rich sequence motif; the sequence is PESPR. Residues 284–347 are Cytoplasmic-facing; the sequence is ESPRWLLSQK…FRTPRLRKRT (64 aa). Serine 333 carries the phosphoserine modification. A helical membrane pass occupies residues 348–368; sequence FILMYLWFTDSVLYQGLILHM. Topologically, residues 369-376 are extracellular; sequence GATSGNLY. A helical membrane pass occupies residues 377–397; that stretch reads LDFLYSALVEIPGAFIALITI. Residues 398–402 lie on the Cytoplasmic side of the membrane; it reads DRVGR. The chain crosses the membrane as a helical span at residues 403 to 423; sequence IYPMAMSNLLAGAACLVMIFI. Residues 424–431 lie on the Extracellular side of the membrane; that stretch reads SPDLHWLN. Residues 432–452 traverse the membrane as a helical segment; that stretch reads IIIMCVGRMGITIAIQMICLV. Residues 453–464 lie on the Cytoplasmic side of the membrane; it reads NAELYPTFVRNL. A helical membrane pass occupies residues 465–485; that stretch reads GVMVCSSLCDIGGIITPFIVF. At 486-492 the chain is on the extracellular side; the sequence is RLREVWQ. The chain crosses the membrane as a helical span at residues 493–513; that stretch reads ALPLILFAVLGLLAAGVTLLL. Residues 514 to 554 lie on the Cytoplasmic side of the membrane; it reads PETKGVALPETMKDAENLGRKAKPKENTIYLKVQTSEPSGT. Threonine 541 carries the post-translational modification Phosphothreonine.

Belongs to the major facilitator (TC 2.A.1) superfamily. Organic cation transporter (TC 2.A.1.19) family. Phosphorylated. In terms of tissue distribution, widely expressed with high level in liver. In liver, expressed around the central vein. Expressed in kidney. Expressed in small intestine enterocytes. Localized to peritubular myoid cells, Leydig cells and moderately to the basal membrane of Sertoli cells in testes. Expressed in tracheal and bronchial ciliated epithelium in the respiratory tract. Also expressed in skeletal muscle, stomach, spleen, heart, placentacolon, brain, granulycytes and lympohocytes. Expressed in liver and in glial cell lines. As to expression, expressed in glial cell lines. Not expressed in liver.

It is found in the basolateral cell membrane. It localises to the apical cell membrane. The protein localises to the lateral cell membrane. Its subcellular location is the basal cell membrane. The protein resides in the cell membrane. It catalyses the reaction 1-methylnicotinamide(out) = 1-methylnicotinamide(in). The catalysed reaction is dopamine(out) = dopamine(in). It carries out the reaction serotonin(out) = serotonin(in). The enzyme catalyses (R)-adrenaline(out) = (R)-adrenaline(in). It catalyses the reaction histamine(out) = histamine(in). The catalysed reaction is guanidine(out) = guanidine(in). It carries out the reaction acetylcholine(in) = acetylcholine(out). The enzyme catalyses thiamine(in) = thiamine(out). It catalyses the reaction agmatine(out) = agmatine(in). The catalysed reaction is putrescine(out) = putrescine(in). It carries out the reaction spermidine(in) = spermidine(out). The enzyme catalyses L-histidyl-L-proline diketopiperazine(in) = L-histidyl-L-proline diketopiperazine(out). It catalyses the reaction (R)-salsolinol(in) = (R)-salsolinol(out). The catalysed reaction is prostaglandin F2alpha(out) = prostaglandin F2alpha(in). It carries out the reaction prostaglandin E2(out) = prostaglandin E2(in). With respect to regulation, phosphorylation of the transporter leads to changes in its substrate affinity, resulting in a regulation of the transport activity. In contrast with rat ortholog, ASP uptake is inhibited by protein kinase A (PKA) and C (PKC) activation. ASP uptake is also endogenously activated by calmodulin, the calmodulin-dependent kinase II and LCK tyrosine kinase. Inhibited by cGMP, most likely through a cGMP-binding protein that interacts with OCT1. Electrogenic voltage-dependent transporter that mediates the transport of a variety of organic cations such as endogenous bioactive amines, cationic drugs and xenobiotics. Functions as a pH- and Na(+)-independent, bidirectional transporter. Cation cellular uptake or release is driven by the electrochemical potential (i.e. membrane potential and concentration gradient) and substrate selectivity. Hydrophobicity is a major requirement for recognition in polyvalent substrates and inhibitors. Primarily expressed at the basolateral membrane of hepatocytes and proximal tubules and involved in the uptake and disposition of cationic compounds by hepatic and renal clearance from the blood flow. Most likely functions as an uptake carrier in enterocytes contributing to the intestinal elimination of organic cations from the systemic circulation. Transports endogenous monoamines such as N-1-methylnicotinamide (NMN), guanidine, histamine, neurotransmitters dopamine, serotonin and adrenaline. Also transports natural polyamines such as spermidine, agmatine and putrescine at low affinity, but relatively high turnover. Involved in the hepatic uptake of vitamin B1/thiamine, hence regulating hepatic lipid and energy metabolism. Mediates the bidirectional transport of acetylcholine (ACh) at the apical membrane of ciliated cell in airway epithelium, thereby playing a role in luminal release of ACh from bronchial epithelium. Transports dopaminergic neuromodulators cyclo(his-pro) and salsolinol with lower efficency. Also capable of transporting non-amine endogenous compounds such as prostaglandin E2 (PGE2) and prostaglandin F2-alpha (PGF2-alpha). May contribute to the transport of cationic compounds in testes across the blood-testis-barrier. Also involved in the uptake of xenobiotics tributylmethylammonium (TBuMA), quinidine, N-methyl-quinine (NMQ), N-methyl-quinidine (NMQD) N-(4,4-azo-n-pentyl)-quinuclidine (APQ), azidoprocainamide methoiodide (AMP), N-(4,4-azo-n-pentyl)-21-deoxyajmalinium (APDA) and 4-(4-(dimethylamino)styryl)-N-methylpyridinium (ASP). Its function is as follows. Mediates the uptake of 1-methyl-4-phenylpyridinium (MPP(+)). In terms of biological role, not able to uptake 1-methyl-4-phenylpyridinium (MPP(+)). The chain is Solute carrier family 22 member 1 from Homo sapiens (Human).